Reading from the N-terminus, the 212-residue chain is Transmembrane protein 65 (212 aa).

Residues 1–88 (MIRSVLLRAL…SRLTAAQLRY (88 aa)) lie on the Cytoplasmic side of the membrane. A helical membrane pass occupies residues 89 to 109 (ILLHNAIPFIGFGFLDNAIMI). Residues 110–116 (AAGTQIE) are Extracellular-facing. Residues 117 to 137 (LSIGLTLGISTMAAAALGNLV) form a helical membrane-spanning segment. Over 138–139 (SD) the chain is Cytoplasmic. The chain crosses the membrane as a helical span at residues 140 to 160 (LAGLGLAGYVEALAVRLGMQI). Over 161–178 (PDLSPRQVDMWQTRVSSH) the chain is Extracellular. The chain crosses the membrane as a helical span at residues 179-199 (MGKAIGVAIGCILGMFPLLFL). Over 200 to 212 (SDEEDKKPKKDSN) the chain is Cytoplasmic.

Monomer. Homodimer. Interacts with GJA1. As to expression, expression is restricted to the heart (at protein level).

It is found in the cell membrane. Its subcellular location is the mitochondrion inner membrane. Essential for maintaining proper cardiac intercalated disk (ICD) structure and function. May regulate cardiac conduction and the function of the gap junction protein GJA1. May contribute to the stability and proper localization of GJA1 to cardiac intercalated disk thereby regulating gap junction communication. Regulates mitochondrial respiration and mitochondrial DNA copy number maintenance. This chain is Transmembrane protein 65 (tmem65), found in Danio rerio (Zebrafish).